A 409-amino-acid polypeptide reads, in one-letter code: Pyruvate dehydrogenase E1 component subunit alpha, mitochondrial (409 aa).

Thr6 bears the Phosphothreonine mark. Pyruvate is bound by residues His109, Tyr135, Arg136, Ala174, Gly182, Val184, Asp213, Gly214, Ala215, Asn242, and Tyr244. Residues Tyr135 and Arg136 each contribute to the thiamine diphosphate site. Residues Gly182, Val184, Asp213, Gly214, Ala215, and Asn242 each coordinate thiamine diphosphate. Asp213 contacts Mg(2+). Mg(2+)-binding residues include Asn242 and Tyr244. Tyr306 bears the Phosphotyrosine mark. His309 is a binding site for thiamine diphosphate. Residues Ser310 and Ser312 each carry the phosphoserine modification.

In terms of assembly, tetramer of 2 alpha and 2 beta subunits. It depends on thiamine diphosphate as a cofactor. The cofactor is Mg(2+).

Its subcellular location is the mitochondrion matrix. The catalysed reaction is N(6)-[(R)-lipoyl]-L-lysyl-[protein] + pyruvate + H(+) = N(6)-[(R)-S(8)-acetyldihydrolipoyl]-L-lysyl-[protein] + CO2. E1 activity is regulated by phosphorylation (inactivation) and dephosphorylation (activation) of the alpha subunit. Its function is as follows. The pyruvate dehydrogenase complex catalyzes the overall conversion of pyruvate to acetyl-CoA and CO(2). It contains multiple copies of three enzymatic components: pyruvate dehydrogenase (E1), dihydrolipoamide acetyltransferase (E2) and lipoamide dehydrogenase (E3). The sequence is that of Pyruvate dehydrogenase E1 component subunit alpha, mitochondrial (pda1) from Schizosaccharomyces pombe (strain 972 / ATCC 24843) (Fission yeast).